The following is a 119-amino-acid chain: Protein TusC (119 aa).

It belongs to the DsrF/TusC family. As to quaternary structure, heterohexamer, formed by a dimer of trimers. The hexameric TusBCD complex contains 2 copies each of TusB, TusC and TusD. The TusBCD complex interacts with TusE.

The protein resides in the cytoplasm. Functionally, part of a sulfur-relay system required for 2-thiolation of 5-methylaminomethyl-2-thiouridine (mnm(5)s(2)U) at tRNA wobble positions. The sequence is that of Protein TusC from Escherichia coli O127:H6 (strain E2348/69 / EPEC).